A 558-amino-acid chain; its full sequence is MFVRMLVFRVLLLIALVGKSVIGLSLMSFIAPPDPDWTPDDYYYSYEQSSPDEDPSVTQTTPENPDWYYEDDDPCQSNPCEHGGDCIIRGDTFSCSCPAPFSGSRCQTAQNKCKDNPCVHGDCLITQKHPYYRCACKYPYTGPDCSKVLPACRPNPCQNGGVCSRHRRRSRFTCACPDQYKGKFCEIGPDDCYVGDGYSYRGKVSKTVNQNPCLYWNSHLLLQETYNMFMEDAETHGIAEHNFCRNPDGDHKPWCFVKVNSEKVKWEYCDVTVCPVPDTPNPVESLLEPVMELPGFESCGKTEVAEHAVKRIYGGFKSTAGKHPWQVSLQTSLPLTTSMPQGHFCGGALIHPCWVLTAAHCTDINTKHLKVVLGDQDLKKTESHEQTFRVEKILKYSQYNERDEIPHNDIALLKLKPVGGHCALESRYVKTVCLPSDPFPSGTECHISGWGVTETGEGSRQLLDAKVKLIANPLCNSRQLYDHTIDDSMICAGNLQKPGSDTCQGDSGGPLTCEKDGTYYVYGIVSWGQECGKKPGVYTQVTKFLNWIKTTMHREAGL.

Positions 1–23 (MFVRMLVFRVLLLIALVGKSVIG) are cleaved as a signal peptide. EGF-like domains lie at 71–107 (DDDP…SRCQ), 109–146 (AQNK…PDCS), and 148–186 (VLPA…KFCE). 18 disulfide bridges follow: Cys75/Cys86, Cys80/Cys95, Cys97/Cys106, Cys113/Cys123, Cys118/Cys134, Cys136/Cys145, Cys152/Cys163, Cys157/Cys174, Cys176/Cys185, Cys192/Cys274, Cys213/Cys255, Cys244/Cys269, Cys299/Cys433, Cys345/Cys361, Cys353/Cys422, Cys445/Cys513, Cys475/Cys491, and Cys503/Cys531. The Kringle domain maps to 191 to 274 (DCYVGDGYSY…KWEYCDVTVC (84 aa)). The Peptidase S1 domain occupies 312–553 (IYGGFKSTAG…FLNWIKTTMH (242 aa)). Catalysis depends on charge relay system residues His360 and Asp409. The Charge relay system role is filled by Ser507.

This sequence belongs to the peptidase S1 family. Heterodimer; disulfide-linked. Heterodimer of a 50 kDa heavy and a 27 kDa light chain linked by a disulfide bond. Proteolytic cleavage at Gly-23 or Met-27 can give rise to the 50 kDa heavy chain (HC) and cleavage at Arg-311 or Lys-317 can give rise to the 27 kDa light chain (LC). The HC can undergo further proteolytic cleavage giving rise to a 26 kDa fragment. The LC can undergo further proteolytic cleavage at Arg-311 leading to a 17-kDa fragment and at Arg-478 leading to a 8-kDa fragment. In terms of tissue distribution, liver and kidney.

Its subcellular location is the secreted. Functionally, cleaves the alpha-chain at multiple sites and the beta-chain between 'Lys-53' and 'Lys-54' but not the gamma-chain of fibrinogen and therefore does not initiate the formation of the fibrin clot and does not cause the fibrinolysis directly. It does not cleave (activate) prothrombin and plasminogen but converts the inactive single chain urinary plasminogen activator (pro-urokinase) to the active two chain form. Activates coagulation factor VII. May function as a tumor suppressor negatively regulating cell proliferation and cell migration. This chain is Factor VII-activating protease, found in Mus musculus (Mouse).